We begin with the raw amino-acid sequence, 929 residues long: Valine--tRNA ligase (929 aa).

Positions 59 to 69 match the 'HIGH' region motif; the sequence is PNVTGSLHMGH. The 'KMSKS' region motif lies at 557–561; sequence KMSKS. Residue Lys560 coordinates ATP. Residues 862 to 929 adopt a coiled-coil conformation; that stretch reads LVDLDALRGR…LARQRLSDLG (68 aa).

It belongs to the class-I aminoacyl-tRNA synthetase family. ValS type 1 subfamily. In terms of assembly, monomer.

Its subcellular location is the cytoplasm. The enzyme catalyses tRNA(Val) + L-valine + ATP = L-valyl-tRNA(Val) + AMP + diphosphate. Its function is as follows. Catalyzes the attachment of valine to tRNA(Val). As ValRS can inadvertently accommodate and process structurally similar amino acids such as threonine, to avoid such errors, it has a 'posttransfer' editing activity that hydrolyzes mischarged Thr-tRNA(Val) in a tRNA-dependent manner. This chain is Valine--tRNA ligase, found in Prochlorococcus marinus (strain MIT 9313).